Here is a 354-residue protein sequence, read N- to C-terminus: Homeobox-leucine zipper protein HOX27 (354 aa).

Residues 98-175 (SVAAGAPGME…DDEGASARKK (78 aa)) are disordered. Positions 148–157 (QGGGGGGGGE) are enriched in gly residues. Residues 171–230 (SARKKLRLSKEQSAFLEESFKEHSTLNPKQKVALAKQLNLRPRQVEVWFQNRRARTKLKQ) constitute a DNA-binding region (homeobox). The segment at 229–273 (KQTEVDCEYLKRCCETLTEENRRLHKELAELRALKTARPFYMHLP) is leucine-zipper. Residues 294–323 (STSAPAAATSPAAAPTAAARTAVASPEPHR) are disordered.

Belongs to the HD-ZIP homeobox family. Class II subfamily. As to expression, expressed in seedlings, roots, stems, leaf sheaths and blades and panicles.

It is found in the nucleus. Functionally, probable transcription factor. This Oryza sativa subsp. indica (Rice) protein is Homeobox-leucine zipper protein HOX27 (HOX27).